The primary structure comprises 128 residues: Azurin (128 aa).

The Plastocyanin-like domain occupies Ala1–Lys128. Cys3 and Cys26 are joined by a disulfide. Residues His46, Cys112, His117, and Met121 each contribute to the Cu cation site.

It localises to the periplasm. Transfers electrons from cytochrome c551 to cytochrome oxidase. The protein is Azurin of Pseudomonas fluorescens biotype B.